The following is a 279-amino-acid chain: Shikimate dehydrogenase (NADP(+)) (279 aa).

Shikimate-binding positions include 18 to 20 (SRS) and threonine 64. Residue lysine 68 is the Proton acceptor of the active site. Glutamate 80 contacts NADP(+). Residues asparagine 89 and aspartate 104 each coordinate shikimate. NADP(+)-binding positions include 129-133 (GAGGA), 153-158 (NRTVSR), and isoleucine 218. Residue tyrosine 220 coordinates shikimate. Glycine 241 is an NADP(+) binding site.

This sequence belongs to the shikimate dehydrogenase family. As to quaternary structure, homodimer.

It carries out the reaction shikimate + NADP(+) = 3-dehydroshikimate + NADPH + H(+). The protein operates within metabolic intermediate biosynthesis; chorismate biosynthesis; chorismate from D-erythrose 4-phosphate and phosphoenolpyruvate: step 4/7. Its function is as follows. Involved in the biosynthesis of the chorismate, which leads to the biosynthesis of aromatic amino acids. Catalyzes the reversible NADPH linked reduction of 3-dehydroshikimate (DHSA) to yield shikimate (SA). This Chelativorans sp. (strain BNC1) protein is Shikimate dehydrogenase (NADP(+)).